A 129-amino-acid chain; its full sequence is uncharacterized protein (129 aa).

This is an uncharacterized protein from Archaeoglobus fulgidus (strain ATCC 49558 / DSM 4304 / JCM 9628 / NBRC 100126 / VC-16).